Reading from the N-terminus, the 863-residue chain is Ubiquitin carboxyl-terminal hydrolase 13 (863 aa).

The residue at position 114 (serine 114) is a Phosphoserine; by AURKB. A Phosphothreonine modification is found at threonine 122. A UBP-type; degenerate zinc finger spans residues 187–295; the sequence is PVSKYANNLT…KHLAHFGIDM (109 aa). Residues cysteine 211, cysteine 214, cysteine 231, and histidine 244 each contribute to the Zn(2+) site. A Glycyl lysine isopeptide (Lys-Gly) (interchain with G-Cter in SUMO2) cross-link involves residue lysine 311. The region spanning 336–861 is the USP domain; that stretch reads TGLKNLGNSC…LGYMYFYRRI (526 aa). Cysteine 345 acts as the Nucleophile in catalysis. Lysine 405 is covalently cross-linked (Glycyl lysine isopeptide (Lys-Gly) (interchain with G-Cter in SUMO2)). UBA domains follow at residues 652–693 and 727–767; these read DIDE…IIVH and QPPE…IFSH. The active-site Proton acceptor is the histidine 823.

The protein belongs to the peptidase C19 family. In terms of assembly, interacts with UFD1. Interacts (via UBA domains) with SIAH2 (when ubiquitinated). Interacts with BAG6; the interaction is direct and may mediate UBL4A deubiquitination. Interacts (via UBA 2 domain) with AMFR; the interaction is direct. Interacts with UBL4A; may be indirect via BAG6. Interacts with NEDD4. In terms of processing, phosphorylated by AURKB at Ser-114; leading to stabilization of cell cycle proteins such as SKP2 and AURKB, but not MCL1. As to expression, highly expressed in ovary and testes.

It localises to the cytoplasm. It catalyses the reaction Thiol-dependent hydrolysis of ester, thioester, amide, peptide and isopeptide bonds formed by the C-terminal Gly of ubiquitin (a 76-residue protein attached to proteins as an intracellular targeting signal).. Specifically inhibited by spautin-1 (specific and potent autophagy inhibitor-1), a derivative of MBCQ that binds to USP13 and inhibits deubiquitinase activity. Regulated by PIK3C3/VPS34-containing complexes. The weak deubiquitinase activity in vitro suggests the existence of some mechanism that activates the enzyme. Deubiquitinase that mediates deubiquitination of target proteins such as BECN1, MITF, SKP2 and USP10 and is involved in various processes such as autophagy, endoplasmic reticulum-associated degradation (ERAD), cell cycle progression or DNA damage response. Component of a regulatory loop that controls autophagy and p53/TP53 levels: mediates deubiquitination of BECN1, a key regulator of autophagy, leading to stabilize the PIK3C3/VPS34-containing complexes. Alternatively, forms with NEDD4 a deubiquitination complex, which subsequently stabilizes VPS34 to promote autophagy. Also deubiquitinates USP10, an essential regulator of p53/TP53 stability. In turn, PIK3C3/VPS34-containing complexes regulate USP13 stability, suggesting the existence of a regulatory system by which PIK3C3/VPS34-containing complexes regulate p53/TP53 protein levels via USP10 and USP13. Recruited by nuclear UFD1 and mediates deubiquitination of SKP2, thereby regulating endoplasmic reticulum-associated degradation (ERAD). Also regulates ERAD through the deubiquitination of UBL4A a component of the BAG6/BAT3 complex. Mediates stabilization of SIAH2 independently of deubiquitinase activity: binds ubiquitinated SIAH2 and acts by impairing SIAH2 autoubiquitination. Regulates the cell cycle progression by stabilizing cell cycle proteins such as SKP2 and AURKB. In addition, plays an important role in maintaining genomic stability and in DNA replication checkpoint activation via regulation of RAP80 and TOPBP1. Deubiquitinates the multifunctional protein HMGB1 and subsequently drives its nucleocytoplasmic localization and its secretion. Positively regulates type I and type II interferon signalings by deubiquitinating STAT1 but negatively regulates antiviral response by deubiquitinating STING1. In Homo sapiens (Human), this protein is Ubiquitin carboxyl-terminal hydrolase 13 (USP13).